Reading from the N-terminus, the 315-residue chain is Eukaryotic translation initiation factor 2 subunit 1 (315 aa).

An S1 motif domain is found at 17–88; it reads EDVVMVNVRS…EKGYIDLSKR (72 aa). A Phosphoserine; by HRI modification is found at Ser-49. A Phosphoserine modification is found at Ser-52. At Lys-141 the chain carries N6-acetyllysine. A Phosphoserine modification is found at Ser-158. A phosphothreonine mark is found at Thr-279 and Thr-281. Positions 293–315 are disordered; the sequence is LERENAEVDGDDDAEEMEAKAED. Over residues 299–308 the composition is skewed to acidic residues; sequence EVDGDDDAEE.

Belongs to the eIF-2-alpha family. In terms of assembly, eukaryotic translation initiation factor 2 eIF2 is a heterotrimeric complex composed of an alpha (EIF2S1), a beta (EIF2S2) and a gamma (EIF2S3) chain. eIF2 is member of the 43S pre-initiation complex (43S PIC). eIF2 forms a complex with at least CELF1/CUGBP1, CALR, CALR3, EIF2S1, EIF2S2, HSP90B1 and HSPA5. Interaction with METAP2 protects EIF2S1 from inhibitory phosphorylation. Interacts with ABCF1 isoform 2. Associates with ribosomes. Interacts with DDX3X in an RNA-independent manner. Interacts with CDC123. As to quaternary structure, (Microbial infection) Interacts with rotavirus A non-structural protein 2; this interaction probably plays a role in the sequestration of IF2A in viral factories. Interacts with rotavirus A non-structural protein 5; this interaction probably plays a role in its sequestration in viral factories. In terms of processing, phosphorylation at Ser-49 and Ser-52 stabilizes the eIF-2/GDP/eIF2B complex and prevents GDP/GTP exchange reaction, thus impairing the recycling of eIF-2 between successive rounds of initiation and leading to global inhibition of translation, while concomitantly initiating the preferential translation of integrated stress response (ISR)-specific mRNAs. Substrate for at least 4 kinases: EIF2AK1/HRI, EIF2AK2/PKR, EIF2AK3/PERK and EIF2AK4/GCN2. Phosphorylation on Ser-52 by the EIF2AK4/GCN2 protein kinase occurs in response to amino acid starvation and UV irradiation. Phosphorylation at Ser-52 by the EIF2AK3/PERK protein kinase occurs in response to the unfolded protein response. Phosphorylation at Ser-52 by EIF2AK1/HRI in response to mitochondrial damage promotes relocalization to the mitochondrial surface. Post-translationally, (Microbial infection) Phosphorylation by vaccinia virus protein E3 and rotavirus A stabilizes the eIF-2/GDP/eIF2B complex and prevents GDP/GTP exchange reaction, thus impairing the recycling of eIF-2 between successive rounds of initiation and leading to global inhibition of translation.

The protein localises to the cytoplasm. Its subcellular location is the stress granule. The protein resides in the cytosol. It localises to the mitochondrion. With respect to regulation, activity is regulated by phosphorylation at Ser-49 and Ser-52, which stabilizes the eIF2/GDP/eIF2B complex and prevents the eIF2B-mediated exchange of GDP for GTP, thereby preventing the formation of the 43S pre-initiation complex (43S PIC). This results in the global attenuation of 5' cap-dependent protein synthesis and concomitant translation of ISR-specific mRNAs that contain a short upstream open reading frame (uORF) in their 5' UTR, such as ATF4, ATF5, DDIT3/CHOP and PPP1R15A/GADD34. In terms of biological role, member of the eIF2 complex that functions in the early steps of protein synthesis by forming a ternary complex with GTP and initiator tRNA. This complex binds to a 40S ribosomal subunit, followed by mRNA binding to form a 43S pre-initiation complex (43S PIC). Junction of the 60S ribosomal subunit to form the 80S initiation complex is preceded by hydrolysis of the GTP bound to eIF2 and release of an eIF2-GDP binary complex. In order for eIF2 to recycle and catalyze another round of initiation, the GDP bound to eIF2 must exchange with GTP by way of a reaction catalyzed by eIF2B. EIF2S1/eIF2-alpha is a key component of the integrated stress response (ISR), required for adaptation to various stress: phosphorylation by metabolic-stress sensing protein kinases (EIF2AK1/HRI, EIF2AK2/PKR, EIF2AK3/PERK and EIF2AK4/GCN2) in response to stress converts EIF2S1/eIF2-alpha in a global protein synthesis inhibitor, leading to an attenuation of cap-dependent translation, while concomitantly initiating the preferential translation of ISR-specific mRNAs, such as the transcriptional activators ATF4 and QRICH1, and hence allowing ATF4- and QRICH1-mediated reprogramming. EIF2S1/eIF2-alpha also acts as an activator of mitophagy in response to mitochondrial damage: phosphorylation by EIF2AK1/HRI promotes relocalization to the mitochondrial surface, thereby triggering PRKN-independent mitophagy. This chain is Eukaryotic translation initiation factor 2 subunit 1, found in Homo sapiens (Human).